A 262-amino-acid polypeptide reads, in one-letter code: Phosphatidylglycerol--prolipoprotein diacylglyceryl transferase (262 aa).

4 helical membrane passes run 17-37 (LAIH…YALG), 57-77 (LIFY…VLFY), 95-115 (GGMS…LFAH), and 119-139 (LGFF…LAAG). Arg-140 provides a ligand contact to a 1,2-diacyl-sn-glycero-3-phospho-(1'-sn-glycerol). A run of 3 helical transmembrane segments spans residues 173–193 (PSQL…LWWY), 200–220 (AGQV…LVEF), and 227–247 (FLGL…PMVL).

It belongs to the Lgt family.

The protein localises to the cell inner membrane. The catalysed reaction is L-cysteinyl-[prolipoprotein] + a 1,2-diacyl-sn-glycero-3-phospho-(1'-sn-glycerol) = an S-1,2-diacyl-sn-glyceryl-L-cysteinyl-[prolipoprotein] + sn-glycerol 1-phosphate + H(+). The protein operates within protein modification; lipoprotein biosynthesis (diacylglyceryl transfer). Functionally, catalyzes the transfer of the diacylglyceryl group from phosphatidylglycerol to the sulfhydryl group of the N-terminal cysteine of a prolipoprotein, the first step in the formation of mature lipoproteins. This Bordetella parapertussis (strain 12822 / ATCC BAA-587 / NCTC 13253) protein is Phosphatidylglycerol--prolipoprotein diacylglyceryl transferase.